Here is a 196-residue protein sequence, read N- to C-terminus: Protein GrpE (196 aa).

The interval 1–39 (MSSKEQKTPEGQAPEEIIMDQHEEIEAVEPEASAEQVDP) is disordered.

It belongs to the GrpE family. As to quaternary structure, homodimer.

It is found in the cytoplasm. Functionally, participates actively in the response to hyperosmotic and heat shock by preventing the aggregation of stress-denatured proteins, in association with DnaK and GrpE. It is the nucleotide exchange factor for DnaK and may function as a thermosensor. Unfolded proteins bind initially to DnaJ; upon interaction with the DnaJ-bound protein, DnaK hydrolyzes its bound ATP, resulting in the formation of a stable complex. GrpE releases ADP from DnaK; ATP binding to DnaK triggers the release of the substrate protein, thus completing the reaction cycle. Several rounds of ATP-dependent interactions between DnaJ, DnaK and GrpE are required for fully efficient folding. In Escherichia coli (strain SMS-3-5 / SECEC), this protein is Protein GrpE.